The chain runs to 106 residues: MSANKIRCHDEVVVLTGKDKGKIGRVKFLCLSKKTVIVSGINVVKKHQKPVPNKNQPGGIIEKEAFIHLSNVAIFNAALNKADRVGFKIKNGKKIRIFKSNGNLIK.

The protein belongs to the universal ribosomal protein uL24 family. In terms of assembly, part of the 50S ribosomal subunit.

One of two assembly initiator proteins, it binds directly to the 5'-end of the 23S rRNA, where it nucleates assembly of the 50S subunit. Functionally, one of the proteins that surrounds the polypeptide exit tunnel on the outside of the subunit. This chain is Large ribosomal subunit protein uL24, found in Blochmanniella floridana.